The primary structure comprises 113 residues: Protein FPV195 (113 aa).

The protein belongs to the poxviruses A31 family.

The sequence is that of Protein FPV195 from Vertebrata (FPV).